A 75-amino-acid chain; its full sequence is Small ribosomal subunit protein bS18 (75 aa).

This sequence belongs to the bacterial ribosomal protein bS18 family. In terms of assembly, part of the 30S ribosomal subunit. Forms a tight heterodimer with protein bS6.

Functionally, binds as a heterodimer with protein bS6 to the central domain of the 16S rRNA, where it helps stabilize the platform of the 30S subunit. The sequence is that of Small ribosomal subunit protein bS18 from Mycoplasma capricolum subsp. capricolum (strain California kid / ATCC 27343 / NCTC 10154).